Reading from the N-terminus, the 432-residue chain is D-amino acid dehydrogenase (432 aa).

Residue 3 to 17 (VVILGSGVVGVTSAW) coordinates FAD.

It belongs to the DadA oxidoreductase family. FAD serves as cofactor.

The enzyme catalyses a D-alpha-amino acid + A + H2O = a 2-oxocarboxylate + AH2 + NH4(+). The protein operates within amino-acid degradation; D-alanine degradation; NH(3) and pyruvate from D-alanine: step 1/1. Oxidative deamination of D-amino acids. In Salmonella arizonae (strain ATCC BAA-731 / CDC346-86 / RSK2980), this protein is D-amino acid dehydrogenase.